Reading from the N-terminus, the 448-residue chain is Asparagine--tRNA ligase (448 aa).

The protein belongs to the class-II aminoacyl-tRNA synthetase family. Homodimer.

The protein resides in the cytoplasm. The catalysed reaction is tRNA(Asn) + L-asparagine + ATP = L-asparaginyl-tRNA(Asn) + AMP + diphosphate + H(+). The protein is Asparagine--tRNA ligase of Streptococcus agalactiae serotype Ia (strain ATCC 27591 / A909 / CDC SS700).